Reading from the N-terminus, the 363-residue chain is Phospho-N-acetylmuramoyl-pentapeptide-transferase (363 aa).

The next 11 helical transmembrane spans lie at 4–24, 28–48, 72–92, 96–116, 129–149, 169–189, 200–220, 241–261, 266–286, 294–314, and 342–362; these read NLLV…NVIV, IAIL…IKYF, TPTM…LMLA, NIYV…GLID, INAT…CMIV, LTID…IGSS, GLVT…CYLA, ELTV…WYNI, IFMG…ISVI, GIIG…IYSI, and IVSR…SSLI.

The protein belongs to the glycosyltransferase 4 family. MraY subfamily. Requires Mg(2+) as cofactor.

It is found in the cell inner membrane. The catalysed reaction is UDP-N-acetyl-alpha-D-muramoyl-L-alanyl-gamma-D-glutamyl-meso-2,6-diaminopimeloyl-D-alanyl-D-alanine + di-trans,octa-cis-undecaprenyl phosphate = di-trans,octa-cis-undecaprenyl diphospho-N-acetyl-alpha-D-muramoyl-L-alanyl-D-glutamyl-meso-2,6-diaminopimeloyl-D-alanyl-D-alanine + UMP. Its pathway is cell wall biogenesis; peptidoglycan biosynthesis. Functionally, catalyzes the initial step of the lipid cycle reactions in the biosynthesis of the cell wall peptidoglycan: transfers peptidoglycan precursor phospho-MurNAc-pentapeptide from UDP-MurNAc-pentapeptide onto the lipid carrier undecaprenyl phosphate, yielding undecaprenyl-pyrophosphoryl-MurNAc-pentapeptide, known as lipid I. The chain is Phospho-N-acetylmuramoyl-pentapeptide-transferase from Orientia tsutsugamushi (strain Ikeda) (Rickettsia tsutsugamushi).